The chain runs to 163 residues: 5-hydroxymethyl-dUMP N-hydrolase (163 aa).

A2 carries the post-translational modification N-acetylalanine. G16 serves as a coordination point for 5-hydroxymethyl-dUMP. S17 is modified (phosphoserine). Residues I18, R19, G20, S87, G89, and E93 each contribute to the 5-hydroxymethyl-dUMP site. S87 is modified (phosphoserine). A phosphoserine mark is found at S112, S117, S127, and S158. Residue S117 participates in 5-hydroxymethyl-dUMP binding.

In terms of assembly, monomer and homodimer. Highly expressed in heart, kidney, liver and spleen. Weakly expressed in lung and skeletal muscle.

It is found in the cytoplasm. The protein resides in the nucleus. It catalyses the reaction 5-hydroxymethyl-dUMP + H2O = 5-hydroxymethyluracil + 2-deoxy-D-ribose 5-phosphate. Functionally, part of a nucleotide salvage pathway that eliminates epigenetically modified 5-hydroxymethyl-dCMP (hmdCMP) in a two-step process entailing deamination to cytotoxic 5-hydroxymethyl-dUMP (hmdUMP), followed by its hydrolysis into 5-hydroxymethyluracil (hmU) and 2-deoxy-D-ribose 5-phosphate (deoxyribosephosphate). Catalyzes the second step in that pathway, the hydrolysis of the N-glycosidic bond in hmdUMP, degrading this cytotoxic nucleotide to avoid its genomic integration. The polypeptide is 5-hydroxymethyl-dUMP N-hydrolase (Rattus norvegicus (Rat)).